We begin with the raw amino-acid sequence, 234 residues long: Carbohydrate deacetylase (234 aa).

Mg(2+) is bound by residues His60 and His123.

It belongs to the YdjC deacetylase family. Mg(2+) is required as a cofactor.

Functionally, probably catalyzes the deacetylation of acetylated carbohydrates an important step in the degradation of oligosaccharides. This chain is Carbohydrate deacetylase, found in Bacillus anthracis.